We begin with the raw amino-acid sequence, 465 residues long: GTPase Der (465 aa).

EngA-type G domains follow at residues 3-167 and 179-352; these read PLVA…PERS and IHIA…VSAL. GTP is bound by residues 9–16, 57–61, 119–122, 185–192, 232–236, and 297–300; these read GRPNVGKS, DTGGM, NKID, DTAGL, and NKWD. The KH-like domain occupies 353 to 437; it reads RQFSTSEVNK…PVRFLFREGD (85 aa).

This sequence belongs to the TRAFAC class TrmE-Era-EngA-EngB-Septin-like GTPase superfamily. EngA (Der) GTPase family. Associates with the 50S ribosomal subunit.

In terms of biological role, GTPase that plays an essential role in the late steps of ribosome biogenesis. The sequence is that of GTPase Der from Xylella fastidiosa (strain M23).